We begin with the raw amino-acid sequence, 249 residues long: Small ribosomal subunit protein uS2 (249 aa).

This sequence belongs to the universal ribosomal protein uS2 family.

This Bordetella parapertussis (strain 12822 / ATCC BAA-587 / NCTC 13253) protein is Small ribosomal subunit protein uS2.